The sequence spans 154 residues: UPF0178 protein SPO3827 (154 aa).

It belongs to the UPF0178 family.

The protein is UPF0178 protein SPO3827 of Ruegeria pomeroyi (strain ATCC 700808 / DSM 15171 / DSS-3) (Silicibacter pomeroyi).